The sequence spans 442 residues: Probable diguanylate cyclase DgcI (442 aa).

A signal peptide spans 1–23; the sequence is MSRINKFVLTVSLLIFIMISAVA. Cysteine 24 is lipidated: N-palmitoyl cysteine. Cysteine 24 is lipidated: S-diacylglycerol cysteine. Residues 231-251 form a helical membrane-spanning segment; that stretch reads LIIFFAALVAVISGASCLYLV. The region spanning 319–442 is the GGDEF domain; sequence KGGYLCLFDV…KNGRAQISWQ (124 aa). Mg(2+) is bound at residue aspartate 327. Substrate contacts are provided by asparagine 335, histidine 340, and aspartate 344. Aspartate 371 lines the Mg(2+) pocket.

As to quaternary structure, homodimer. Mg(2+) serves as cofactor.

It is found in the cell membrane. It carries out the reaction 2 GTP = 3',3'-c-di-GMP + 2 diphosphate. It functions in the pathway purine metabolism; 3',5'-cyclic di-GMP biosynthesis. In terms of biological role, catalyzes the synthesis of cyclic-di-GMP (c-di-GMP) via the condensation of 2 GTP molecules. This Escherichia coli (strain K12) protein is Probable diguanylate cyclase DgcI.